Reading from the N-terminus, the 409-residue chain is E3 ubiquitin-protein ligase MARCHF4 (409 aa).

The N-terminal stretch at 1–17 (MLMPLGGLLWWWCCCCG) is a signal peptide. The tract at residues 92-133 (GPREAVGRETPPLPPPPPLPPSGDDDWDGPATGPPASLLSSA) is disordered. The segment covering 102–112 (PPLPPPPPLPP) has biased composition (pro residues). The RING-CH-type zinc finger occupies 154-214 (DSGMRTPLCR…ELCYYKYHVI (61 aa)). Zn(2+) contacts are provided by cysteine 162, cysteine 165, cysteine 178, cysteine 180, histidine 188, cysteine 191, cysteine 204, and cysteine 207. Transmembrane regions (helical) follow at residues 242-262 (LGSLFLIASISWLIWSTFSPS) and 271-291 (LFQICYGMYGFMDVVCIGLII). 2 disordered regions span residues 323–372 (EDQK…GPVS) and 389–409 (PHDQRSTQGSGRELVMRVTTV). Residues 328–343 (GGRTNLQTSSSAQANL) show a composition bias toward polar residues.

The protein localises to the golgi apparatus membrane. The enzyme catalyses S-ubiquitinyl-[E2 ubiquitin-conjugating enzyme]-L-cysteine + [acceptor protein]-L-lysine = [E2 ubiquitin-conjugating enzyme]-L-cysteine + N(6)-ubiquitinyl-[acceptor protein]-L-lysine.. Its pathway is protein modification; protein ubiquitination. Its function is as follows. E3 ubiquitin-protein ligase that may mediate ubiquitination of MHC-I and CD4, and promote their subsequent endocytosis and sorting to lysosomes via multivesicular bodies. E3 ubiquitin ligases accept ubiquitin from an E2 ubiquitin-conjugating enzyme in the form of a thioester and then directly transfer the ubiquitin to targeted substrates. The protein is E3 ubiquitin-protein ligase MARCHF4 (Marchf4) of Mus musculus (Mouse).